The primary structure comprises 554 residues: Hydroxylamine reductase (554 aa).

[2Fe-2S] cluster contacts are provided by cysteine 3, cysteine 6, cysteine 18, and cysteine 25. Histidine 252, glutamate 276, cysteine 320, cysteine 408, cysteine 436, cysteine 461, glutamate 495, and lysine 497 together coordinate hybrid [4Fe-2O-2S] cluster. Cysteine persulfide is present on cysteine 408.

It belongs to the HCP family. The cofactor is [2Fe-2S] cluster. It depends on hybrid [4Fe-2O-2S] cluster as a cofactor.

It localises to the cytoplasm. The enzyme catalyses A + NH4(+) + H2O = hydroxylamine + AH2 + H(+). Catalyzes the reduction of hydroxylamine to form NH(3) and H(2)O. The polypeptide is Hydroxylamine reductase (Photobacterium profundum (strain SS9)).